Reading from the N-terminus, the 358-residue chain is UDP-N-acetylglucosamine--N-acetylmuramyl-(pentapeptide) pyrophosphoryl-undecaprenol N-acetylglucosamine transferase (358 aa).

Residues 11 to 13 (TGG), asparagine 124, arginine 164, serine 195, and glutamine 291 each bind UDP-N-acetyl-alpha-D-glucosamine.

It belongs to the glycosyltransferase 28 family. MurG subfamily.

The protein localises to the cell inner membrane. The catalysed reaction is di-trans,octa-cis-undecaprenyl diphospho-N-acetyl-alpha-D-muramoyl-L-alanyl-D-glutamyl-meso-2,6-diaminopimeloyl-D-alanyl-D-alanine + UDP-N-acetyl-alpha-D-glucosamine = di-trans,octa-cis-undecaprenyl diphospho-[N-acetyl-alpha-D-glucosaminyl-(1-&gt;4)]-N-acetyl-alpha-D-muramoyl-L-alanyl-D-glutamyl-meso-2,6-diaminopimeloyl-D-alanyl-D-alanine + UDP + H(+). It functions in the pathway cell wall biogenesis; peptidoglycan biosynthesis. Functionally, cell wall formation. Catalyzes the transfer of a GlcNAc subunit on undecaprenyl-pyrophosphoryl-MurNAc-pentapeptide (lipid intermediate I) to form undecaprenyl-pyrophosphoryl-MurNAc-(pentapeptide)GlcNAc (lipid intermediate II). This chain is UDP-N-acetylglucosamine--N-acetylmuramyl-(pentapeptide) pyrophosphoryl-undecaprenol N-acetylglucosamine transferase, found in Leptospira interrogans serogroup Icterohaemorrhagiae serovar copenhageni (strain Fiocruz L1-130).